The chain runs to 117 residues: Large ribosomal subunit protein bL20c (117 aa).

It belongs to the bacterial ribosomal protein bL20 family.

The protein localises to the plastid. It is found in the chloroplast. In terms of biological role, binds directly to 23S ribosomal RNA and is necessary for the in vitro assembly process of the 50S ribosomal subunit. It is not involved in the protein synthesizing functions of that subunit. This Morus indica (Mulberry) protein is Large ribosomal subunit protein bL20c.